The chain runs to 1023 residues: Solute carrier family 12 member 3 (1023 aa).

At 1–134 (MELPGDGVHL…EPPPEPPRFG (134 aa)) the chain is on the cytoplasmic side. The interval 91–131 (DPEQDDFKPPMYEETAGERMGGGDSSEEEEEEHKEPPPEPP) is disordered. Residues 135 to 164 (WVQGVMIRCMLNIWGVILYLRLPWITAQAG) traverse the membrane as a discontinuously helical segment. Residues L145 and W148 each contribute to the Na(+) site. Residues 165–186 (IGLTWVIILLSSFITGITGLST) traverse the membrane as a helical segment. The Cytoplasmic segment spans residues 187 to 217 (SAIATNGKVKGGGTYFLISRSLGPELGGSIG). A helical transmembrane segment spans residues 218–240 (LIFAFANAVAVAMHTVGFAETVT). Topologically, residues 241 to 252 (DLMRENGVVMVD) are extracellular. A run of 2 helical transmembrane segments spans residues 253-277 (PIND…AGME) and 278-300 (WESK…YIVG). The Extracellular portion of the chain corresponds to 301 to 335 (TIIPASPQKQAKGFFSYKAEIFAANFVPGWRGKEG). A discontinuously helical membrane pass occupies residues 336 to 357 (SFFGMFSIFFPSATGILAGANI). Chloride contacts are provided by G350, I351, and L352. At 358–368 (SGDLKDPTVAI) the chain is on the cytoplasmic side. The helical transmembrane segment at 369–390 (PRGTLMAIFWTTISYLIISATI) threads the bilayer. The Extracellular segment spans residues 391 to 452 (GACVVRDASG…YQSMSLVSAF (62 aa)). N403 and N414 each carry an N-linked (GlcNAc...) asparagine glycan. 2 disulfide bridges follow: C415–C420 and C429–C435. N432 carries an N-linked (GlcNAc...) asparagine glycan. The chain crosses the membrane as a helical span at residues 453 to 476 (APLISAGIFGATLSSALACLVSAP). 3 residues coordinate Na(+): A463, S466, and S467. At 477-506 (KVFQCLCKDQLYPLIGFFGKGYGKNAEPLR) the chain is on the cytoplasmic side. A helical transmembrane segment spans residues 507–521 (AYLLTYVIAVCFVLI). Over 522-526 (AELNT) the chain is Extracellular. Residues 527–543 (IAPIISNFFLCSYALIN) traverse the membrane as a helical segment. Y539 contacts chloride. Residues 544–566 (FSCFHASVTNSPGWRPSFRFYSK) lie on the Cytoplasmic side of the membrane. A run of 2 helical transmembrane segments spans residues 567–586 (WLSL…LTWW) and 587–598 (AALIAFGVVFFL). Over 599-1023 (LGYTLYKKPA…QENVLTFYCQ (425 aa)) the chain is Cytoplasmic. The segment at 614–629 (SVQASSYSMALNQCVG) is scissor helix. The ATP site is built by L647, R654, V676, G733, and L772.

Belongs to the SLC12A transporter family. As to quaternary structure, homodimer; adopts a domain-swap conformation at the scissor helices connecting the transmembrane domain and C-terminal domain. Expressed in urinary bladder, intestine, ovary, skeletal muscle, eye, brain, and kidney.

It localises to the cell membrane. The enzyme catalyses chloride(out) + Na(+)(out) = chloride(in) + Na(+)(in). Its activity is regulated as follows. Inhibited by thiazide-type diuretics including polythiazide, metolazone, cyclothiazide, hydrochlorothiazide and chlorthalidone. Thiazide drugs, specifically inhibit SLC12A3/NCC transporter activity by competing with chloride for binding. Electroneutral sodium and chloride ion cotransporter, with a coupling ratio 1 Na(+):1 Cl(-). Mediates sodium and chloride reabsorption. The polypeptide is Solute carrier family 12 member 3 (slc12a3) (Pseudopleuronectes americanus (Winter flounder)).